The sequence spans 399 residues: 3-sulfinopropanoyl-CoA desulfinase (399 aa).

FAD contacts are provided by residues 121-124, serine 130, and 153-156; these read ICIS and YWIT. A substrate-binding site is contributed by 244–245; sequence YN. FAD is bound by residues arginine 273, glutamine 340, serine 344, 367-371, and glutamine 388; that span reads GGTAQ.

Belongs to the acyl-CoA dehydrogenase family. Homotrimer or homotetramer. FAD is required as a cofactor.

It catalyses the reaction 3-sulfinopropanoyl-CoA + H2O = propanoyl-CoA + sulfite + H(+). Catalyzes the conversion 3-sulfinopropanoyl-CoA (3SP-CoA) to propanoyl-CoA by abstraction of sulfite. Does not show dehydrogenase activity. In Variovorax paradoxus, this protein is 3-sulfinopropanoyl-CoA desulfinase.